Here is an 808-residue protein sequence, read N- to C-terminus: Probable inorganic carbon transporter subunit DabA (808 aa).

The Zn(2+) site is built by cysteine 334, aspartate 336, histidine 494, and cysteine 509.

It belongs to the inorganic carbon transporter (TC 9.A.2) DabA family. Forms a complex with DabB. It depends on Zn(2+) as a cofactor.

The protein resides in the cell inner membrane. In terms of biological role, part of an energy-coupled inorganic carbon pump. This is Probable inorganic carbon transporter subunit DabA from Rhodopseudomonas palustris (strain BisB5).